The chain runs to 198 residues: SOSS complex subunit B2 (198 aa).

The OB DNA-binding region spans isoleucine 26 to tyrosine 89. The disordered stretch occupies residues glutamate 114–arginine 198. 2 stretches are compositionally biased toward polar residues: residues serine 136–proline 151 and leucine 173–asparagine 188.

Belongs to the SOSS-B family. SOSS-B2 subfamily. As to quaternary structure, component of the SOSS complex, composed of SOSS-B (SOSS-B1/NABP2 or SOSS-B2/NABP1), SOSS-A/INTS3 and SOSS-C/INIP. SOSS complexes containing SOSS-B1/NABP2 are more abundant than complexes containing SOSS-B2/NABP1. As to expression, ubiquitous with high expression in the thymus.

The protein localises to the nucleus. Its function is as follows. Component of the SOSS complex, a multiprotein complex that functions downstream of the MRN complex to promote DNA repair and G2/M checkpoint. In the SOSS complex, acts as a sensor of single-stranded DNA that binds to single-stranded DNA, in particular to polypyrimidines. The SOSS complex associates with DNA lesions and influences diverse endpoints in the cellular DNA damage response including cell-cycle checkpoint activation, recombinational repair and maintenance of genomic stability. Required for efficient homologous recombination-dependent repair of double-strand breaks (DSBs) and ATM-dependent signaling pathways. This Mus musculus (Mouse) protein is SOSS complex subunit B2 (Nabp1).